The sequence spans 221 residues: Leucyl/phenylalanyl-tRNA--protein transferase (221 aa).

This sequence belongs to the L/F-transferase family.

The protein resides in the cytoplasm. It carries out the reaction N-terminal L-lysyl-[protein] + L-leucyl-tRNA(Leu) = N-terminal L-leucyl-L-lysyl-[protein] + tRNA(Leu) + H(+). It catalyses the reaction N-terminal L-arginyl-[protein] + L-leucyl-tRNA(Leu) = N-terminal L-leucyl-L-arginyl-[protein] + tRNA(Leu) + H(+). The enzyme catalyses L-phenylalanyl-tRNA(Phe) + an N-terminal L-alpha-aminoacyl-[protein] = an N-terminal L-phenylalanyl-L-alpha-aminoacyl-[protein] + tRNA(Phe). Its function is as follows. Functions in the N-end rule pathway of protein degradation where it conjugates Leu, Phe and, less efficiently, Met from aminoacyl-tRNAs to the N-termini of proteins containing an N-terminal arginine or lysine. This chain is Leucyl/phenylalanyl-tRNA--protein transferase, found in Phenylobacterium zucineum (strain HLK1).